The primary structure comprises 219 residues: Uracil-DNA glycosylase (219 aa).

Asp-61 acts as the Proton acceptor in catalysis.

This sequence belongs to the uracil-DNA glycosylase (UDG) superfamily. UNG family.

It localises to the cytoplasm. The catalysed reaction is Hydrolyzes single-stranded DNA or mismatched double-stranded DNA and polynucleotides, releasing free uracil.. Its function is as follows. Excises uracil residues from the DNA which can arise as a result of misincorporation of dUMP residues by DNA polymerase or due to deamination of cytosine. This Neisseria meningitidis serogroup A / serotype 4A (strain DSM 15465 / Z2491) protein is Uracil-DNA glycosylase.